Reading from the N-terminus, the 886-residue chain is Desmocollin-1 (886 aa).

Positions methionine 1–alanine 29 are cleaved as a signal peptide. The propeptide occupies cysteine 30–arginine 134. N-linked (GlcNAc...) asparagine glycosylation is found at asparagine 130 and asparagine 165. 5 Cadherin domains span residues arginine 135–phenylalanine 242, glutamate 243–phenylalanine 354, threonine 355–cysteine 471, glutamine 472–proline 575, and glutamine 576–aspartate 682. Residues arginine 135 to lysine 691 are Extracellular-facing. At threonine 385 the chain carries Phosphothreonine. Asparagine 546 is a glycosylation site (N-linked (GlcNAc...) (high mannose) asparagine). N-linked (GlcNAc...) asparagine glycosylation is present at asparagine 613. Residues tryptophan 692 to valine 714 traverse the membrane as a helical segment. Over threonine 715–lysine 886 the chain is Cytoplasmic.

Binds to JUP/plakoglobin. Expressed in the epidermis and inner root sheaths of hair follicles (at protein level).

It is found in the cell membrane. The protein resides in the cell junction. The protein localises to the desmosome. In terms of biological role, a component of desmosome cell-cell junctions which are required for positive regulation of cellular adhesion. Required for desmosome adhesion strength between the granular layers of the epidermis, as a result moderates epidermal proliferation and differentiation. Is therefore required to maintain postnatal epidermal barrier function and normal hair follicle morphology into adulthood. This Mus musculus (Mouse) protein is Desmocollin-1 (Dsc1).